The chain runs to 322 residues: Putative small RNA degrading nuclease 4 (322 aa).

Residues 75 to 213 (MLALDCEMVL…HDAAAAMKLA (139 aa)) enclose the Exonuclease domain.

It belongs to the REXO1/REXO3 family.

It is found in the nucleus. In terms of biological role, putative 3'-5' exonuclease degrading single-stranded small RNAs. The protein is Putative small RNA degrading nuclease 4 (SDN4) of Arabidopsis thaliana (Mouse-ear cress).